The primary structure comprises 226 residues: Lysosomal-associated transmembrane protein 4B (226 aa).

A run of 4 helical transmembrane segments spans residues 26–46, 72–92, 100–120, and 153–173; these read ILLG…LLSA, MCIA…ATYG, WIIP…LVAI, and CLVL…GYLI. The segment at 205 to 221 is required for NEDD4 interaction; the sequence is PPYDDATVNGAAKEPPP.

This sequence belongs to the LAPTM4/LAPTM5 transporter family. Homooligomer; upon reaching the lysosomes. Interacts with MCOLN1. Interacts with NEDD4; may play a role in the lysosomal sorting of LAPTM4B; enhances HGS association with NEDD4; mediates inhibition of EGFR degradation. Interacts with PIP5K1C; promotes SNX5 association with LAPTM4B; kinase activity of PIP5K1C is required; interaction is regulated by phosphatidylinositol 4,5-bisphosphate generated by PIP5K1C. Interacts with HGS; promotes HGS ubiquitination. Interacts with SNX5. Interacts with SLC3A2 and SLC7A5; recruits SLC3A2 and SLC7A5 to lysosomes to promote leucine uptake into these organelles and is required for mTORC1 activation. Interacts with LRRC32; decreases TGFB1 production in regulatory T cells. Interacts with BECN1; competes with EGFR for LAPTM4B binding; regulates EGFR activity. Interacts with EGFR; positively correlates with EGFR activation. Post-translationally, undergoes proteolytic cleavage following delivery to the lysosomes. Ubiquitinated by NEDD4.

The protein resides in the endomembrane system. The protein localises to the late endosome membrane. Its subcellular location is the cell membrane. It localises to the cell projection. It is found in the lysosome membrane. The protein resides in the endosome membrane. The protein localises to the endosome. Its subcellular location is the multivesicular body membrane. It localises to the multivesicular body lumen. Functionally, required for optimal lysosomal function. Blocks EGF-stimulated EGFR intraluminal sorting and degradation. Conversely by binding with the phosphatidylinositol 4,5-bisphosphate, regulates its PIP5K1C interaction, inhibits HGS ubiquitination and relieves LAPTM4B inhibition of EGFR degradation. Recruits SLC3A2 and SLC7A5 (the Leu transporter) to the lysosome, promoting entry of leucine and other essential amino acid (EAA) into the lysosome, stimulating activation of proton-transporting vacuolar (V)-ATPase protein pump (V-ATPase) and hence mTORC1 activation. Plays a role as negative regulator of TGFB1 production in regulatory T cells. Binds ceramide and facilitates its exit from late endosome in order to control cell death pathways. This chain is Lysosomal-associated transmembrane protein 4B, found in Macaca fascicularis (Crab-eating macaque).